Reading from the N-terminus, the 426-residue chain is Inhibin beta A chain (426 aa).

The first 20 residues, 1 to 20, serve as a signal peptide directing secretion; sequence MPLLWLRGFLLASCWIIVRS. A propeptide spanning residues 21–310 is cleaved from the precursor; sequence SPTPGSEGHS…EDHPHRRRRR (290 aa). A glycan (N-linked (GlcNAc...) asparagine) is linked at asparagine 165. Residues 259–288 are disordered; that stretch reads KKKKKEEEGEGKKKGGGEGGAGADEEKEQS. Residues 263–274 are compositionally biased toward basic and acidic residues; the sequence is KEEEGEGKKKGG. Disulfide bonds link cysteine 314–cysteine 322, cysteine 321–cysteine 391, cysteine 350–cysteine 423, and cysteine 354–cysteine 425.

This sequence belongs to the TGF-beta family. Dimeric, linked by one or more disulfide bonds. Inhibin A is a dimer of alpha/INHA and beta-A/INHBA. Activin A is a homodimer of beta-A/INHBA. Activin AB is a dimer of beta-A/INHBA and beta-B/INHBB. Interacts with FST and FSTL3; these interactions prevent activin A interaction to its type II receptor. Activin A interacts with ACVR2A. Activin A interacts with BMPR2. Inhibin A interacts with ACVR1; this interaction creates a non-signaling complex (NSC) that inhibits ACVR1-mediated BMP signaling. Inhibin A interacts with ACVR2A.

The protein resides in the secreted. Inhibins/activins are involved in regulating a number of diverse functions such as hypothalamic and pituitary hormone secretion, gonadal hormone secretion, germ cell development and maturation, erythroid differentiation, insulin secretion, nerve cell survival, embryonic axial development or bone growth, depending on their subunit composition. In terms of biological role, activin A is a homodimer of INHBA that plays a role in several essential biological processes including embryonic development, stem cell maintenance and differentiation, haematopoiesis, cell proliferation and tissue fibrosis. Signals through type I (such as ACVR1B or ACVR1C) and type II receptors (such as ACVR2A, ACVR2B or BMPR2) which, upon ligand binding, phosphorylate SMAD2 and SMAD3 intracellular signaling mediators that form a complex with SMAD4, translocate to the nucleus and modulate gene expression. Can also activate alternative non-canonical intracellular signaling pathways including the p38 MAPK, extracellular signal-regulated kinases 1/2 (ERK1/2) and c-Jun N-terminal kinases (JNKs) to modulate cell migration and differentiation. Alternatively, promotes osteoblastic differentiation via ACVRL1-SMAD1/5/9 pathway. In addition, can engage the type I receptor ACVR1 to form an ACVR1-activin A-type II receptor non-signaling complex (NSC) that renders receptors unavailable for engagement with BMPs, hence resulting in an apparent inhibition of ACVR1-mediated BMP signaling. Functionally, inhibin A is a dimer of alpha/INHA and beta-A/INHBA that functions as a feedback regulator in the hypothalamic-pituitary-gonadal (HPG) axis. Inhibits the secretion of FSH from the anterior pituitary gland by acting on pituitary gonadotrope cells. Antagonizes activin A by binding to the proteoglycan, betaglycan, and forming a stable complex with and, thereby, sequestering type II activin receptors while excluding type I receptor. The sequence is that of Inhibin beta A chain (INHBA) from Homo sapiens (Human).